A 292-amino-acid polypeptide reads, in one-letter code: MAPKRQSPLPLQKKKPRPPPALGLEETSASAGLPKKGEKEQQEAIEHIDEVQNEIDRLNEQDSEEILKVEQKYNKLRQPFFQKRSELIAKIPNFGVTTFVNHPQVSSLLGEEDEEALHYLTKVEVTEFEDIKSGYRIDFYFDENPYFENKVFSKEFHLNESGDPSSKSTKIKWKSGKDVTKRSSQTQNKASRKRQHEEPESFFTWFTDHSDAGADELEEVIKDDIWPNPLQYYLVPDMDDEEGGEDDDDDDDDGDEGEEELEDIDEGDEDEGEEDEDDDEGEEGEEDEGEDD.

Positions 1–11 are enriched in low complexity; it reads MAPKRQSPLPL. Disordered stretches follow at residues 1-43 and 158-292; these read MAPK…EQQE and LNES…GEDD. A coiled-coil region spans residues 35 to 78; that stretch reads KKGEKEQQEAIEHIDEVQNEIDRLNEQDSEEILKVEQKYNKLRQ. Residues 237–292 show a composition bias toward acidic residues; that stretch reads DMDDEEGGEDDDDDDDDGDEGEEELEDIDEGDEDEGEEDEDDDEGEEGEEDEGEDD.

It belongs to the nucleosome assembly protein (NAP) family. Expressed in endothelial cell (EC) and protein-induced pluripotent stem (PiPS) endothelial cell (EC) (at protein level).

The protein resides in the cytoplasm. Its subcellular location is the nucleus. Its function is as follows. Plays a role as a transcriptional activator involved in the early stage of somatic cell reprogramming. Promotes the differentiation of protein-induced pluripotent stem (PiPS) cells into endothelial cells and the formation of vascular-like tubes (in vitro). Involved in the transcription induction of vascular endothelial-cadherin (VE-cadherin) expression. Associates to the VE-cadherin gene promoter. In Homo sapiens (Human), this protein is Protein SETSIP (SETSIP).